Reading from the N-terminus, the 364-residue chain is Dihydroorotate dehydrogenase (quinone) (364 aa).

Residues 62–66 (AGFDK) and Thr86 each bind FMN. Lys66 is a substrate binding site. 111 to 115 (NRMGF) lines the substrate pocket. Positions 142 and 175 each coordinate FMN. Asn175 is a binding site for substrate. Ser178 functions as the Nucleophile in the catalytic mechanism. Residue Asn180 coordinates substrate. 2 residues coordinate FMN: Lys216 and Thr244. Substrate is bound at residue 245–246 (NT). FMN-binding positions include Gly267, Gly296, and 317–318 (YT).

The protein belongs to the dihydroorotate dehydrogenase family. Type 2 subfamily. As to quaternary structure, monomer. The cofactor is FMN.

The protein localises to the cell membrane. The catalysed reaction is (S)-dihydroorotate + a quinone = orotate + a quinol. The protein operates within pyrimidine metabolism; UMP biosynthesis via de novo pathway; orotate from (S)-dihydroorotate (quinone route): step 1/1. Its function is as follows. Catalyzes the conversion of dihydroorotate to orotate with quinone as electron acceptor. The polypeptide is Dihydroorotate dehydrogenase (quinone) (Anaeromyxobacter dehalogenans (strain 2CP-C)).